The primary structure comprises 704 residues: Polyribonucleotide nucleotidyltransferase (704 aa).

2 residues coordinate Mg(2+): Asp-487 and Asp-493. Residues 554 to 613 (PRLLTIKIHPDKIREVIGKGGSTIQAITKETGTQIDIQDDGTIIIASVNAIAAQAAKSRI) enclose the KH domain. One can recognise an S1 motif domain in the interval 623–691 (GRIYEGKVAK…KQGRIRLSIK (69 aa)).

The protein belongs to the polyribonucleotide nucleotidyltransferase family. Component of the RNA degradosome, which is a multiprotein complex involved in RNA processing and mRNA degradation. Requires Mg(2+) as cofactor.

The protein resides in the cytoplasm. It carries out the reaction RNA(n+1) + phosphate = RNA(n) + a ribonucleoside 5'-diphosphate. Involved in mRNA degradation. Catalyzes the phosphorolysis of single-stranded polyribonucleotides processively in the 3'- to 5'-direction. The protein is Polyribonucleotide nucleotidyltransferase of Xanthomonas axonopodis pv. citri (strain 306).